The primary structure comprises 456 residues: GTPase Der (456 aa).

EngA-type G domains lie at 4-169 (PVVA…PSKD) and 178-353 (VQLA…DQSR). Residues 10–17 (GRPNVGKS), 57–61 (DTGGL), 120–123 (NKCE), 184–191 (GRPNVGKS), 231–235 (DTAGI), and 296–299 (NKWD) contribute to the GTP site. One can recognise a KH-like domain in the interval 354–439 (RRVTTSVVNE…PIKLFWRGKQ (86 aa)).

Belongs to the TRAFAC class TrmE-Era-EngA-EngB-Septin-like GTPase superfamily. EngA (Der) GTPase family. Associates with the 50S ribosomal subunit.

Its function is as follows. GTPase that plays an essential role in the late steps of ribosome biogenesis. The polypeptide is GTPase Der (Prochlorococcus marinus (strain NATL2A)).